A 752-amino-acid chain; its full sequence is Mitochondrial Rho GTPase 1 (752 aa).

Residues 1 to 671 lie on the Cytoplasmic side of the membrane; sequence MRKDVRIVLA…RNALSYGTNR (671 aa). The Miro 1 domain maps to 2-170; it reads RKDVRIVLAG…FYFAQKAVLY (169 aa). Residues 11-18, 57-61, and 115-118 each bind GTP; these read GDPDVGKS, DTSSS, and NKID. EF-hand domains lie at 186–221 and 333–368; these read ACVDALKRIFRLCDSDKDGLLSDGELNDFQRKCFDT and NGYQFLTDIFEVHDKDRDGALSEEELDSLFITAPDN. Ca(2+) is bound by residues Asp-199, Asp-201, Asp-203, Glu-210, Asp-346, Asp-348, Asp-350, and Glu-357. A disordered region spans residues 426–460; that stretch reads SSGSASTPAPIPLTPTGPPGSRPSRNRTPCPPSTI. Residues 434 to 446 show a composition bias toward pro residues; that stretch reads APIPLTPTGPPGS. A Miro 2 domain is found at 481-651; it reads RSVFLGFVLG…YGLICTIAVD (171 aa). GTP-binding positions include 490–497, 526–530, and 595–598; these read GAAGSGKT, EQAGA, and TKAD. Residues 672-692 traverse the membrane as a helical; Anchor for type IV membrane protein segment; sequence WQFWGYIGLVVIGGGGAVWIC. Residues 693–752 are Mitochondrial intermembrane-facing; sequence AKVLKVPIGSTLGFGSSASTTSWWLSGAQARGAGGPNATKVSSWFDWIRWQSSSNVRSEL.

The protein belongs to the mitochondrial Rho GTPase family.

Its subcellular location is the mitochondrion outer membrane. In terms of biological role, mitochondrial GTPase involved in mitochondrial trafficking. Probably involved in control of anterograde transport of mitochondria and their subcellular distribution. This Mycosarcoma maydis (Corn smut fungus) protein is Mitochondrial Rho GTPase 1 (GEM1).